The sequence spans 61 residues: Metallothionein-1 (61 aa).

N-acetylmethionine is present on Met-1. The segment at 1–29 (MDPNCSCPTGGSCTCAGSCKCKACRCPSC) is beta. 20 residues coordinate a divalent metal cation: Cys-5, Cys-7, Cys-13, Cys-15, Cys-19, Cys-21, Cys-24, Cys-26, Cys-29, Cys-33, Cys-34, Cys-36, Cys-37, Cys-41, Cys-44, Cys-48, Cys-50, Cys-57, Cys-59, and Cys-60. Residues 30–61 (KKSCCSCCPVGCAKCAQGCVCKGASDKCSCCA) are alpha.

Belongs to the metallothionein superfamily. Type 1 family. As to quaternary structure, monomer.

In terms of biological role, metallothioneins have a high content of cysteine residues that bind various heavy metals; these proteins are transcriptionally regulated by both heavy metals and glucocorticoids. The protein is Metallothionein-1 (MT1) of Bos taurus (Bovine).